Here is a 561-residue protein sequence, read N- to C-terminus: Arginine--tRNA ligase (561 aa).

The 'HIGH' region signature appears at 136–146; the sequence is ANPTGLLHMGN.

It belongs to the class-I aminoacyl-tRNA synthetase family. As to quaternary structure, monomer.

The protein localises to the cytoplasm. It carries out the reaction tRNA(Arg) + L-arginine + ATP = L-arginyl-tRNA(Arg) + AMP + diphosphate. This is Arginine--tRNA ligase from Desulforamulus reducens (strain ATCC BAA-1160 / DSM 100696 / MI-1) (Desulfotomaculum reducens).